The following is a 607-amino-acid chain: CRS2-associated factor 2, chloroplastic (607 aa).

Residues 1–75 (MSPPPPQRPS…GNGGNPAFRA (75 aa)) form a disordered region. The N-terminal 79 residues, 1–79 (MSPPPPQRPS…NPAFRAPHLR (79 aa)), are a transit peptide targeting the chloroplast. 2 CRM domains span residues 228–324 (EPLT…TRPR) and 346–442 (EGLT…YPKP). The tract at residues 482–505 (KMFELWTNAIESSVALMLDDAEVD) is CRS2 binding. Residues 550–576 (TEDEPETGTLEPQQHEFTESSDVAEDD) form a disordered region.

In terms of assembly, interacts with CRS2 and RNA. Part of large ribonucleo-protein complexes that include group IIB introns, CRS2 and CAF2.

Its subcellular location is the plastid. It localises to the chloroplast stroma. In terms of biological role, required for the splicing of group IIB introns in chloroplasts. Forms splicing particles with CRS2. Interacts with RNA and confers intron specificity of the splicing particles. In Oryza sativa subsp. japonica (Rice), this protein is CRS2-associated factor 2, chloroplastic.